Consider the following 134-residue polypeptide: FK506-binding protein 2 (134 aa).

Residues 1–19 (MRFSIFSTLLVSLATLSTA) form the signal peptide. Residues 39 to 127 (GDTVQMHYKG…IFETELVGID (89 aa)) enclose the PPIase FKBP-type domain. Positions 131–134 (KDEL) match the Prevents secretion from ER motif.

The protein belongs to the FKBP-type PPIase family. FKBP2 subfamily.

It is found in the endoplasmic reticulum. It catalyses the reaction [protein]-peptidylproline (omega=180) = [protein]-peptidylproline (omega=0). Its activity is regulated as follows. Inhibited by both FK506 and rapamycin. PPIases accelerate the folding of proteins. It catalyzes the cis-trans isomerization of proline imidic peptide bonds in oligopeptides. This chain is FK506-binding protein 2 (fpr2), found in Aspergillus oryzae (strain ATCC 42149 / RIB 40) (Yellow koji mold).